Consider the following 425-residue polypeptide: Histidine--tRNA ligase (425 aa).

This sequence belongs to the class-II aminoacyl-tRNA synthetase family. In terms of assembly, homodimer.

It is found in the cytoplasm. It carries out the reaction tRNA(His) + L-histidine + ATP = L-histidyl-tRNA(His) + AMP + diphosphate + H(+). The protein is Histidine--tRNA ligase of Tolumonas auensis (strain DSM 9187 / NBRC 110442 / TA 4).